Reading from the N-terminus, the 172-residue chain is uncharacterized protein (172 aa).

A run of 3 helical transmembrane segments spans residues 44 to 68 (VLVS…AALT), 86 to 110 (LASY…VFSL), and 117 to 135 (VVFI…VTLF).

This sequence belongs to the chlamydial CPn_0442/CT_006/TC_0274 family.

Its subcellular location is the cell membrane. This is an uncharacterized protein from Chlamydia pneumoniae (Chlamydophila pneumoniae).